The following is a 184-amino-acid chain: Peptide deformylase (184 aa).

Fe cation-binding residues include Cys96 and His138. Glu139 is a catalytic residue. His142 contacts Fe cation.

The protein belongs to the polypeptide deformylase family. It depends on Fe(2+) as a cofactor.

It catalyses the reaction N-terminal N-formyl-L-methionyl-[peptide] + H2O = N-terminal L-methionyl-[peptide] + formate. Removes the formyl group from the N-terminal Met of newly synthesized proteins. Requires at least a dipeptide for an efficient rate of reaction. N-terminal L-methionine is a prerequisite for activity but the enzyme has broad specificity at other positions. This chain is Peptide deformylase, found in Cytophaga hutchinsonii (strain ATCC 33406 / DSM 1761 / CIP 103989 / NBRC 15051 / NCIMB 9469 / D465).